The chain runs to 386 residues: Patatin-14 (386 aa).

An N-terminal signal peptide occupies residues 1 to 23; the sequence is MATTKSFLILFFMILATTSSTCA. Residues 32–229 enclose the PNPLA domain; that stretch reads LSIDGGGIKG…TVGDPALLSL (198 aa). The short motif at 36-41 is the GXGXXG element; the sequence is GGGIKG. Residues 75–79 carry the GXSXG motif; it reads GTSTG. The Nucleophile role is filled by serine 77. Residue asparagine 115 is glycosylated (N-linked (GlcNAc...) asparagine). The active-site Proton acceptor is aspartate 215. The short motif at 215-217 is the DGA/G element; it reads DGG. Residues 321 to 381 are a coiled coil; that stretch reads ENALTGTTTE…LLSDRKKLRA (61 aa).

It belongs to the patatin family. In terms of tissue distribution, tuber.

Its subcellular location is the vacuole. In terms of biological role, probable lipolytic acyl hydrolase (LAH), an activity which is thought to be involved in the response of tubers to pathogens. The polypeptide is Patatin-14 (Solanum tuberosum (Potato)).